The chain runs to 391 residues: D-gluconate/D-galactonate dehydratase (391 aa).

E198 lines the Mg(2+) pocket. H200 serves as the catalytic Proton donor. Mg(2+) contacts are provided by E224 and E250. Residue H300 is the Proton acceptor of the active site.

Belongs to the mandelate racemase/muconate lactonizing enzyme family. GaD subfamily. As to quaternary structure, homooctamer. Requires Mg(2+) as cofactor.

The enzyme catalyses D-gluconate = 2-dehydro-3-deoxy-D-gluconate + H2O. It catalyses the reaction D-galactonate = 2-dehydro-3-deoxy-D-galactonate + H2O. It participates in carbohydrate acid metabolism; D-gluconate degradation. Functionally, involved in the degradation of glucose and galactose via the nonphosphorylative variant of Entner-Doudoroff pathway. Catalyzes the dehydration of gluconate to produce 2-keto-3-deoxygluconate (KDG). It is also able to catalyze the dehydration of galactonate to produce 2-keto-3-deoxygalactonate (KDGal). The protein is D-gluconate/D-galactonate dehydratase of Picrophilus torridus (strain ATCC 700027 / DSM 9790 / JCM 10055 / NBRC 100828 / KAW 2/3).